We begin with the raw amino-acid sequence, 317 residues long: Fruit protein pKIWI502 (317 aa).

A disordered region spans residues 1–29 (MSITLSRPSLSRPSLSRHPSLTLHSSLSH). The 112-residue stretch at 71 to 182 (YIWTPVPISR…TQIIGRGFDI (112 aa)) folds into the FAD-binding FR-type domain.

The chain is Fruit protein pKIWI502 from Actinidia deliciosa (Kiwi).